Here is a 216-residue protein sequence, read N- to C-terminus: Superoxide dismutase [Mn], mitochondrial (216 aa).

A mitochondrion-targeting transit peptide spans 1–18; the sequence is MSFLNRNLSRTIKAAVRG. The Mn(2+) site is built by His-44, His-92, Asp-176, and His-180.

It belongs to the iron/manganese superoxide dismutase family. Requires Mn(2+) as cofactor.

The protein resides in the mitochondrion matrix. The catalysed reaction is 2 superoxide + 2 H(+) = H2O2 + O2. Functionally, destroys superoxide anion radicals which are normally produced within the cells and which are toxic to biological systems. The chain is Superoxide dismutase [Mn], mitochondrial (Sod2) from Glossina morsitans morsitans (Savannah tsetse fly).